The primary structure comprises 188 residues: dCTP deaminase (188 aa).

DCTP contacts are provided by residues 111 to 116, 135 to 137, Gln156, Tyr170, and Gln180; these read KSTYAR and TLE. The active-site Proton donor/acceptor is Glu137.

It belongs to the dCTP deaminase family. In terms of assembly, homotrimer.

It catalyses the reaction dCTP + H2O + H(+) = dUTP + NH4(+). It functions in the pathway pyrimidine metabolism; dUMP biosynthesis; dUMP from dCTP (dUTP route): step 1/2. In terms of biological role, catalyzes the deamination of dCTP to dUTP. The sequence is that of dCTP deaminase from Paracidovorax citrulli (strain AAC00-1) (Acidovorax citrulli).